Here is a 95-residue protein sequence, read N- to C-terminus: Co-chaperonin GroES (95 aa).

This sequence belongs to the GroES chaperonin family. As to quaternary structure, heptamer of 7 subunits arranged in a ring. Interacts with the chaperonin GroEL.

Its subcellular location is the cytoplasm. Its function is as follows. Together with the chaperonin GroEL, plays an essential role in assisting protein folding. The GroEL-GroES system forms a nano-cage that allows encapsulation of the non-native substrate proteins and provides a physical environment optimized to promote and accelerate protein folding. GroES binds to the apical surface of the GroEL ring, thereby capping the opening of the GroEL channel. The polypeptide is Co-chaperonin GroES (Dichelobacter nodosus (strain VCS1703A)).